The sequence spans 109 residues: Putative double-stranded DNA mimic protein Ent638_2296 (109 aa).

The protein belongs to the putative dsDNA mimic protein family.

In terms of biological role, may act as a double-stranded DNA (dsDNA) mimic. Probably regulates the activity of a dsDNA-binding protein. This Enterobacter sp. (strain 638) protein is Putative double-stranded DNA mimic protein Ent638_2296.